Consider the following 632-residue polypeptide: MMSQTFFLISDPDNLDYPIYTVHDKSRILDCFCDISLFKTTTITEIELDNEHPDFKILKLYGNTFMTNRIIKNTKYSLLDVNTVQMLLDYGDPDYEFKSTHYLYVFYMSQNRFDICDYLIASNIKFVGTYTKSCLLNQNTLTNYHLFKYIINNSEFFGCCHYDLMYAAFRYTKFYDLCDHLIKSEYNCNIDYDNFLRQLFNKTDSNGFTINCELDTFQIKKLIDENYFDNEKLFYTVLYDSFELTKYIVEKGFYYDFDSVINSDINLEMLKFFIELGNNLTDDHIMILLSKKYSNDYCKKITFLLDNNYITEKHFTNKIVSDIVWFDLNLLDYLINKLNIIELINLDILMKTSILRENINMIKKCIEYGINVDDYMKFAVDYSICITKKLIELGGNIPDDICIYNPYHSLSIESIDIILENNYDSLENLLLKIINQNKETLYIDEILHIMGKLISTNKPIPDLNKILIKSCYYSDNIYKEIIKLDLNLDNYQQIFVNIMRKEYDNIEQLIFFSTYYNSIELLFVVVLSENIDLFKLLLEINCNDTDYLSWAFVFSGRCFKLMKYIVDNYNVDIYQRQIEVCIMIPKKDYQTKRYLQLMGYEISCIYNTECNNDKLPLVEFMKELSIDSTIRP.

ANK repeat units lie at residues 61 to 97, 228 to 250, 251 to 282, 345 to 374, and 517 to 546; these read YGNTFMTNRIIKNTKYSLLDVNTVQMLLDYGDPDYEF, FDNEKLFYTVLYDSFELTKYIVE, KGFYYDFDSVINSDINLEMLKFFIELGNNLTD, NLDILMKTSILRENINMIKKCIEYGINVDD, and NSIELLFVVVLSENIDLFKLLLEINCNDTD.

In Acanthamoeba polyphaga mimivirus (APMV), this protein is Putative ankyrin repeat protein L767.